Here is a 57-residue protein sequence, read N- to C-terminus: Large ribosomal subunit protein bL32c (57 aa).

Belongs to the bacterial ribosomal protein bL32 family.

It is found in the plastid. The protein localises to the chloroplast. The protein is Large ribosomal subunit protein bL32c of Vitis vinifera (Grape).